The following is a 912-amino-acid chain: Coatomer subunit beta (912 aa).

HEAT repeat units follow at residues 59–96 (PIPQ…THLG), 100–135 (SEMI…REAE), 136–172 (VLEP…HFDY), 244–281 (SERS…APTA), 300–337 (NVKM…PNID), 339–375 (CKKV…KEFD), 397–434 (EVLG…TYPS), 441–479 (KKLI…AMTS), 550–575 (LKAQ…TSKS), and 576–612 (AYER…YLKY).

In terms of assembly, oligomeric complex that consists of at least the alpha, beta, beta', gamma, delta, epsilon and zeta subunits.

The protein localises to the cytoplasm. It is found in the golgi apparatus membrane. The protein resides in the cytoplasmic vesicle. Its subcellular location is the COPI-coated vesicle membrane. In terms of biological role, the coatomer is a cytosolic protein complex that binds to dilysine motifs and reversibly associates with Golgi non-clathrin-coated vesicles, which further mediate biosynthetic protein transport from the ER, via the Golgi up to the trans Golgi network. Coatomer complex is required for budding from Golgi membranes, and is essential for the retrograde Golgi-to-ER transport of dilysine-tagged proteins. The protein is Coatomer subunit beta (copb) of Dictyostelium discoideum (Social amoeba).